The sequence spans 313 residues: Ornithine carbamoyltransferase (313 aa).

Carbamoyl phosphate contacts are provided by residues 61–64, glutamine 88, arginine 112, and 139–142; these read STRT and HPCQ. Residues asparagine 170, aspartate 228, and 232-233 contribute to the L-ornithine site; that span reads SM. Residues 268–269 and arginine 296 each bind carbamoyl phosphate; that span reads CL.

It belongs to the aspartate/ornithine carbamoyltransferase superfamily. OTCase family.

The protein resides in the cytoplasm. It carries out the reaction carbamoyl phosphate + L-ornithine = L-citrulline + phosphate + H(+). The protein operates within amino-acid biosynthesis; L-arginine biosynthesis; L-arginine from L-ornithine and carbamoyl phosphate: step 1/3. Its function is as follows. Reversibly catalyzes the transfer of the carbamoyl group from carbamoyl phosphate (CP) to the N(epsilon) atom of ornithine (ORN) to produce L-citrulline. The sequence is that of Ornithine carbamoyltransferase from Bordetella avium (strain 197N).